Consider the following 308-residue polypeptide: Alpha/beta hydrolase domain-containing protein WAV2 (308 aa).

A helical transmembrane segment spans residues 6–26; it reads SALFYGFGGIVVAGVALLVAF. Catalysis depends on charge relay system residues S159, D243, and R308.

This sequence belongs to the serine esterase family. Expressed in roots, rosette leaves, stems and flowers.

It is found in the cell membrane. Functionally, involved in the regulation of root growth. Involved in the suppression of the root bending in response to touch stimuli, gravity and light. Negatively regulates stimulus-induced root bending through inhibition of root tip rotation. This chain is Alpha/beta hydrolase domain-containing protein WAV2, found in Arabidopsis thaliana (Mouse-ear cress).